Reading from the N-terminus, the 92-residue chain is Bombyxin A-4 (92 aa).

A signal peptide spans 1 to 19 (MKILLAIALMLSTVMWVST). Gln20 carries the post-translational modification Pyrrolidone carboxylic acid. Intrachain disulfides connect Cys29–Cys79, Cys41–Cys92, and Cys78–Cys83. A propeptide spans 50 to 70 (SGAQFASYGSAWLMPYSEGRG) (c peptide like).

The protein belongs to the insulin family. In terms of assembly, heterodimer of a B chain and an A chain linked by two disulfide bonds.

It localises to the secreted. Functionally, brain peptide responsible for activation of prothoracic glands to produce ecdysone in insects. In Bombyx mori (Silk moth), this protein is Bombyxin A-4 (BBXA4).